The following is a 96-amino-acid chain: Putative pterin-4-alpha-carbinolamine dehydratase (96 aa).

Belongs to the pterin-4-alpha-carbinolamine dehydratase family.

It catalyses the reaction (4aS,6R)-4a-hydroxy-L-erythro-5,6,7,8-tetrahydrobiopterin = (6R)-L-erythro-6,7-dihydrobiopterin + H2O. The sequence is that of Putative pterin-4-alpha-carbinolamine dehydratase from Novosphingobium aromaticivorans (strain ATCC 700278 / DSM 12444 / CCUG 56034 / CIP 105152 / NBRC 16084 / F199).